The primary structure comprises 470 residues: Serine--tRNA ligase (470 aa).

272–274 (TAE) is a binding site for L-serine. Residue 303 to 305 (RAE) participates in ATP binding. L-serine is bound at residue Glu-326. 393-396 (EISS) is a binding site for ATP. An L-serine-binding site is contributed by Ser-428.

It belongs to the class-II aminoacyl-tRNA synthetase family. Type-1 seryl-tRNA synthetase subfamily. Homodimer. The tRNA molecule binds across the dimer.

The protein resides in the cytoplasm. It catalyses the reaction tRNA(Ser) + L-serine + ATP = L-seryl-tRNA(Ser) + AMP + diphosphate + H(+). The enzyme catalyses tRNA(Sec) + L-serine + ATP = L-seryl-tRNA(Sec) + AMP + diphosphate + H(+). It participates in aminoacyl-tRNA biosynthesis; selenocysteinyl-tRNA(Sec) biosynthesis; L-seryl-tRNA(Sec) from L-serine and tRNA(Sec): step 1/1. In terms of biological role, catalyzes the attachment of serine to tRNA(Ser). Is also able to aminoacylate tRNA(Sec) with serine, to form the misacylated tRNA L-seryl-tRNA(Sec), which will be further converted into selenocysteinyl-tRNA(Sec). The polypeptide is Serine--tRNA ligase (Nitrobacter hamburgensis (strain DSM 10229 / NCIMB 13809 / X14)).